The primary structure comprises 196 residues: Imidazoleglycerol-phosphate dehydratase (196 aa).

The protein belongs to the imidazoleglycerol-phosphate dehydratase family.

It is found in the cytoplasm. It carries out the reaction D-erythro-1-(imidazol-4-yl)glycerol 3-phosphate = 3-(imidazol-4-yl)-2-oxopropyl phosphate + H2O. It participates in amino-acid biosynthesis; L-histidine biosynthesis; L-histidine from 5-phospho-alpha-D-ribose 1-diphosphate: step 6/9. The protein is Imidazoleglycerol-phosphate dehydratase of Nitratidesulfovibrio vulgaris (strain DSM 19637 / Miyazaki F) (Desulfovibrio vulgaris).